A 687-amino-acid polypeptide reads, in one-letter code: Macrolide export ATP-binding/permease protein MacB (687 aa).

Residues 6-244 (LKLAAVTRRF…LAEAGVDAAE (239 aa)) form the ABC transporter domain. 42–49 (GASGSGKS) provides a ligand contact to ATP. Positions 246–256 (AEASEAAVGES) are enriched in low complexity. The segment at 246 to 281 (AEASEAAVGESPTRNRHDTPAPPAAVDTDPHVDTGT) is disordered. The next 4 membrane-spanning stretches (helical) occupy residues 312–332 (LLTM…VAIG), 560–580 (LTLL…IGVM), 617–637 (LVCL…GALF), and 650–670 (AGAI…FGFM).

This sequence belongs to the ABC transporter superfamily. Macrolide exporter (TC 3.A.1.122) family. As to quaternary structure, homodimer.

It localises to the cell inner membrane. In terms of biological role, non-canonical ABC transporter that contains transmembrane domains (TMD), which form a pore in the inner membrane, and an ATP-binding domain (NBD), which is responsible for energy generation. Confers resistance against macrolides. This is Macrolide export ATP-binding/permease protein MacB from Burkholderia lata (strain ATCC 17760 / DSM 23089 / LMG 22485 / NCIMB 9086 / R18194 / 383).